The following is a 425-amino-acid chain: Gamma-glutamyl phosphate reductase (425 aa).

The protein belongs to the gamma-glutamyl phosphate reductase family.

It is found in the cytoplasm. The catalysed reaction is L-glutamate 5-semialdehyde + phosphate + NADP(+) = L-glutamyl 5-phosphate + NADPH + H(+). It functions in the pathway amino-acid biosynthesis; L-proline biosynthesis; L-glutamate 5-semialdehyde from L-glutamate: step 2/2. Functionally, catalyzes the NADPH-dependent reduction of L-glutamate 5-phosphate into L-glutamate 5-semialdehyde and phosphate. The product spontaneously undergoes cyclization to form 1-pyrroline-5-carboxylate. The chain is Gamma-glutamyl phosphate reductase from Aromatoleum aromaticum (strain DSM 19018 / LMG 30748 / EbN1) (Azoarcus sp. (strain EbN1)).